We begin with the raw amino-acid sequence, 292 residues long: Homoserine kinase (292 aa).

An ATP-binding site is contributed by Arg81–Ala91.

The protein belongs to the GHMP kinase family. Homoserine kinase subfamily.

The protein resides in the cytoplasm. It carries out the reaction L-homoserine + ATP = O-phospho-L-homoserine + ADP + H(+). Its pathway is amino-acid biosynthesis; L-threonine biosynthesis; L-threonine from L-aspartate: step 4/5. Functionally, catalyzes the ATP-dependent phosphorylation of L-homoserine to L-homoserine phosphate. This Thermococcus gammatolerans (strain DSM 15229 / JCM 11827 / EJ3) protein is Homoserine kinase.